A 1097-amino-acid chain; its full sequence is Transmembrane protein 132D (1097 aa).

A signal peptide spans methionine 1 to glycine 30. Topologically, residues arginine 31–aspartate 913 are extracellular. The span at aspartate 233 to lysine 245 shows a compositional bias: basic and acidic residues. Disordered stretches follow at residues aspartate 233–leucine 263 and serine 885–glutamine 906. Residues leucine 914–isoleucine 934 traverse the membrane as a helical segment. The Cytoplasmic segment spans residues asparagine 935–valine 1097. The disordered stretch occupies residues methionine 1021–arginine 1042.

This sequence belongs to the TMEM132 family. Expressed in mature oligodendrocytes in the brain.

Its subcellular location is the membrane. Functionally, regulates neuronal morphology via inhibition of the WAVE regulatory complex (WCR), a complex that controls F-actin cytoskeletal dynamics. The sequence is that of Transmembrane protein 132D (Tmem132d) from Rattus norvegicus (Rat).